Reading from the N-terminus, the 250-residue chain is Sugar fermentation stimulation protein homolog (250 aa).

It belongs to the SfsA family.

The protein is Sugar fermentation stimulation protein homolog of Trichodesmium erythraeum (strain IMS101).